Here is a 311-residue protein sequence, read N- to C-terminus: Long form salivary protein D7L1 (311 aa).

Positions 1–21 (MIVTGVLLFILLELFAQGSQA) are cleaved as a signal peptide. 4 cysteine pairs are disulfide-bonded: cysteine 37–cysteine 73, cysteine 69–cysteine 128, cysteine 178–cysteine 211, and cysteine 252–cysteine 263.

The protein belongs to the PBP/GOBP family.

The protein resides in the secreted. In terms of biological role, modulates blood feeding of female mosquitoes on vertebrate species by binding and sequestering different mediators involved in the host response. Binds leukotriene C4 and U-46619, a stable analog of thromboxane A2. Inhibits agonist-induced platelet aggregation. Exhibits vasodilating activity. The sequence is that of Long form salivary protein D7L1 from Anopheles gambiae (African malaria mosquito).